The primary structure comprises 196 residues: Lipoprotein signal peptidase (196 aa).

The next 3 helical transmembrane spans lie at 17–37 (SIIITLVIIDQLSKWWFIDNL), 73–93 (SNAIFLITNTLIVCYLYYLMI), and 96–116 (NTIGSFAGYSFVIGGAVGNLI). Residues D126 and D144 contribute to the active site. Residues 135–155 (YSFPVFNLADCFITIGVIILI) traverse the membrane as a helical segment.

This sequence belongs to the peptidase A8 family.

It localises to the cell inner membrane. The catalysed reaction is Release of signal peptides from bacterial membrane prolipoproteins. Hydrolyzes -Xaa-Yaa-Zaa-|-(S,diacylglyceryl)Cys-, in which Xaa is hydrophobic (preferably Leu), and Yaa (Ala or Ser) and Zaa (Gly or Ala) have small, neutral side chains.. Its pathway is protein modification; lipoprotein biosynthesis (signal peptide cleavage). In terms of biological role, this protein specifically catalyzes the removal of signal peptides from prolipoproteins. The chain is Lipoprotein signal peptidase from Rickettsia akari (strain Hartford).